A 240-amino-acid chain; its full sequence is UPF0173 metal-dependent hydrolase OE_2513F (240 aa).

It belongs to the UPF0173 family.

The sequence is that of UPF0173 metal-dependent hydrolase OE_2513F from Halobacterium salinarum (strain ATCC 29341 / DSM 671 / R1).